The chain runs to 448 residues: 4-hydroxybenzoate transporter PcaK (448 aa).

At 1 to 30 (MNQAQNSVGKSLDVQSFINQQPLSRYQWRV) the chain is on the cytoplasmic side. The chain crosses the membrane as a helical span at residues 31 to 51 (VLLCFLIVFLDGLDTAAMGFI). Residues 52 to 67 (APALSQEWGIDRASLG) are Periplasmic-facing. Residues 68-88 (PVMSAALIGMVFGALGSGPLA) form a helical membrane-spanning segment. Residues 89-94 (DRFGRK) lie on the Cytoplasmic side of the membrane. The chain crosses the membrane as a helical span at residues 95-115 (GVLVGAVLVFGGFSLASAYAT). The Periplasmic portion of the chain corresponds to 116 to 119 (NVDQ). Residues 120-140 (LLVLRFLTGLGLGAGMPNATT) form a helical membrane-spanning segment. Residues 141–152 (LLSEYTPERLKS) are Cytoplasmic-facing. Residues 153-173 (LLVTSMFCGFNLGMAGGGFIS) traverse the membrane as a helical segment. The Periplasmic portion of the chain corresponds to 174 to 184 (AKMIPAYGWHS). The chain crosses the membrane as a helical span at residues 185 to 205 (LLVIGGVLPLLLALVLMVWLP). Residues 206–261 (ESARFLVVRNRGTDKIRKTLSPIAPQVVAEAGSFSVPEQKAVAARSVFAVIFSGTY) are Cytoplasmic-facing. The helical transmembrane segment at 262 to 282 (GLGTMLLWLTYFMGLVIVYLL) threads the bilayer. The Periplasmic portion of the chain corresponds to 283–301 (TSWLPTLMRDSGASMEQAA). The helical transmembrane segment at 302 to 322 (FIGALFQFGGVLSAVGVGWAM) threads the bilayer. Over 323 to 329 (DRYNPHK) the chain is Cytoplasmic. A helical membrane pass occupies residues 330 to 350 (VIGIFYLLAGVFAYAVGQSLG). Residue N351 is a topological domain, periplasmic. Residues 352–372 (ITVLATLVLIAGMCVNGAQSA) traverse the membrane as a helical segment. Topologically, residues 373–398 (MPSLAARFYPTQGRATGVSWMLGIGR) are cytoplasmic. A helical transmembrane segment spans residues 399-419 (FGAILGAWSGATLLGLGWNFE). Residues 420–421 (QV) are Periplasmic-facing. The chain crosses the membrane as a helical span at residues 422 to 442 (LTALLVPAALATVGVIVKGLV). Over 443 to 448 (SHADAT) the chain is Cytoplasmic.

The protein belongs to the major facilitator superfamily. Aromatic acid:H(+) symporter (AAHS) (TC 2.A.1.15) family.

Its subcellular location is the cell inner membrane. In terms of biological role, transports 4-hydroxybenzoate (4-HBA) and protocatechuate across the membrane. Driven by the proton motive force. Also functions as a chemoreceptor, which is required for chemotaxis to aromatic acids. The polypeptide is 4-hydroxybenzoate transporter PcaK (pcaK) (Pseudomonas putida (Arthrobacter siderocapsulatus)).